The sequence spans 111 residues: Secreted RxLR effector protein 81 (111 aa).

Positions 1–16 (MLVSMLLIIFPNGVSL) are cleaved as a signal peptide. N52 carries N-linked (GlcNAc...) asparagine glycosylation. The tract at residues 73–92 (KKFSSSDEDKSRDVRRRLRP) is disordered. Residues 88–91 (RRLR) carry the RxLR-dEER motif.

This sequence belongs to the RxLR effector family.

The protein localises to the secreted. Its subcellular location is the host nucleus. It is found in the host cytoplasm. Functionally, secreted effector that partially suppresses the host cell death induced by cell death-inducing proteins. The chain is Secreted RxLR effector protein 81 from Plasmopara viticola (Downy mildew of grapevine).